Here is a 141-residue protein sequence, read N- to C-terminus: Large ribosomal subunit protein uL16 (141 aa).

Positions 1–23 (MLMPKRTKYRKQMKGRNRGKAHR) are disordered.

This sequence belongs to the universal ribosomal protein uL16 family. Part of the 50S ribosomal subunit.

Its function is as follows. Binds 23S rRNA and is also seen to make contacts with the A and possibly P site tRNAs. The protein is Large ribosomal subunit protein uL16 of Helicobacter acinonychis (strain Sheeba).